A 446-amino-acid polypeptide reads, in one-letter code: MENISDLWNSALKELEKKVSKPSYETWLKSTTAHNLKKDVLTITAPNEFARDWLESHYSELISETLYDLTGAKLAIRFIIPQSQAEEDIDLPPVKRNPAQDDSAHLPQSMLNPKYTFDTFVIGSGNRFAHAASLAVAEAPAKAYNPLFIYGGVGLGKTHLMHAIGHYVIEHNPNAKVVYLSSEKFTNEFINSIRDNKAVDFRNKYRNVDVLLIDDIQFLAGKEQTQEEFFHTFNALHEESKQIVISSDRPPKEIPTLEDRLRSRFEWGLITDITPPDLETRIAILRKKAKAEGLDIPNEVMLYIANQIDSNIRELEGALIRVVAYSSLINKDINADLAAEALKDIIPNSKPKIISIYDIQKAVGDVYQVKLEDFKAKKRTKSVAFPRQIAMYLSRELTDSSLPKIGEEFGGRDHTTVIHAHEKISKLLKTDTQLQKQVEEINGILK.

Residues 1–81 (MENISDLWNS…AKLAIRFIIP (81 aa)) are domain I, interacts with DnaA modulators. The interval 81–109 (PQSQAEEDIDLPPVKRNPAQDDSAHLPQS) is domain II. Positions 110–326 (MLNPKYTFDT…GALIRVVAYS (217 aa)) are domain III, AAA+ region. G154, G156, K157, and T158 together coordinate ATP. A domain IV, binds dsDNA region spans residues 327 to 446 (SLINKDINAD…QVEEINGILK (120 aa)).

This sequence belongs to the DnaA family. In terms of assembly, oligomerizes as a right-handed, spiral filament on DNA at oriC.

Its subcellular location is the cytoplasm. Plays an essential role in the initiation and regulation of chromosomal replication. ATP-DnaA binds to the origin of replication (oriC) to initiate formation of the DNA replication initiation complex once per cell cycle. Binds the DnaA box (a 9 base pair repeat at the origin) and separates the double-stranded (ds)DNA. Forms a right-handed helical filament on oriC DNA; dsDNA binds to the exterior of the filament while single-stranded (ss)DNA is stabiized in the filament's interior. The ATP-DnaA-oriC complex binds and stabilizes one strand of the AT-rich DNA unwinding element (DUE), permitting loading of DNA polymerase. After initiation quickly degrades to an ADP-DnaA complex that is not apt for DNA replication. Binds acidic phospholipids. The protein is Chromosomal replication initiator protein DnaA of Bacillus cereus (strain G9842).